The following is a 121-amino-acid chain: MALNIENIVAELENATILELSELVKAIEEKFDVTAAAPVAAAAGAGEAAAAKDSFDVELTAAGDKKVAVIKEVRGITGLGLKEAKELVDGAPTVVKEGLSESEANEIKEKLEAAGASITLK.

It belongs to the bacterial ribosomal protein bL12 family. As to quaternary structure, homodimer. Part of the ribosomal stalk of the 50S ribosomal subunit. Forms a multimeric L10(L12)X complex, where L10 forms an elongated spine to which 2 to 4 L12 dimers bind in a sequential fashion. Binds GTP-bound translation factors.

Its function is as follows. Forms part of the ribosomal stalk which helps the ribosome interact with GTP-bound translation factors. Is thus essential for accurate translation. This Lactococcus lactis subsp. cremoris (strain MG1363) protein is Large ribosomal subunit protein bL12.